The primary structure comprises 283 residues: Zinc finger protein 691 (283 aa).

Residues 1–41 show a composition bias toward basic and acidic residues; that stretch reads MGSEKEQRPEAHLPEEGEGAKPWRVDGSKDSQITPREDHGQ. Positions 1–68 are disordered; the sequence is MGSEKEQRPE…KVTAQAGGPG (68 aa). Residue S43 is modified to Phosphoserine. Residue K81 forms a Glycyl lysine isopeptide (Lys-Gly) (interchain with G-Cter in SUMO2) linkage. 7 C2H2-type zinc fingers span residues 83-105, 111-133, 139-161, 167-189, 195-217, 223-245, and 251-273; these read FICA…QRIH, YKCS…ERIH, YQCA…QQDH, YRCD…HRTH, YICC…HRTH, YECT…QRTH, and YRCT…QKTH.

Belongs to the krueppel C2H2-type zinc-finger protein family.

Its subcellular location is the nucleus. May be involved in transcriptional regulation. The chain is Zinc finger protein 691 (Znf691) from Mus musculus (Mouse).